The following is a 2532-amino-acid chain: Lovastatin diketide synthase lovF (2532 aa).

The region spanning 10 to 430 (PAPIAMVGMG…GANAHAIVEQ (421 aa)) is the Ketosynthase family 3 (KS3) domain. Catalysis depends on for beta-ketoacyl synthase activity residues Cys-183, His-318, and His-353. Residues 545–870 (VFTGQGAQWF…PYLSCLSRGK (326 aa)) are malonyl-CoA:ACP transacylase (MAT) domain. Ser-635 serves as the catalytic For malonyltransferase activity. The tract at residues 941–1078 (HDLIGLQEPL…GLVRAEMDQP (138 aa)) is N-terminal hotdog fold. Residues 941-1246 (HDLIGLQEPL…LEGLVFQSLG (306 aa)) are dehydratase (DH) domain. Positions 941 to 1251 (HDLIGLQEPL…FQSLGASLGT (311 aa)) constitute a PKS/mFAS DH domain. The Proton acceptor; for dehydratase activity role is filled by His-973. The segment at 1075–1094 (MDQPPSSLSNQQRIDPRPWS) is disordered. Polar residues predominate over residues 1078–1087 (PPSSLSNQQR). Positions 1092–1251 (PWSRKTAPQE…FQSLGASLGT (160 aa)) are C-terminal hotdog fold. Asp-1159 serves as the catalytic Proton donor; for dehydratase activity. The methyltransferase (CMet) domain stretch occupies residues 1423–1607 (ELVRLCCHKN…ARDCDSHEFY (185 aa)). Residues 1825–2144 (GLLDSLHFTK…SGQHVGKIVV (320 aa)) form an enoylreductase (ER) domain region. The segment at 2168–2340 (SYLVAGGLGG…AVTIDLGMVQ (173 aa)) is ketoreductase (KR) domain. The Carrier domain maps to 2453–2530 (ESIAVIMEAM…KVAEVVLQRY (78 aa)). Ser-2490 bears the O-(pantetheine 4'-phosphoryl)serine mark.

As to quaternary structure, interacts with LovD. Pantetheine 4'-phosphate is required as a cofactor.

The catalysed reaction is holo-[2-methylbutanoate polyketide synthase] + 2 malonyl-CoA + S-adenosyl-L-methionine + 2 NADPH + 3 H(+) = (S)-2-methylbutanoyl-[2-methylbutanoate polyketide synthase] + S-adenosyl-L-homocysteine + 2 CO2 + 2 NADP(+) + 2 CoA + H2O. Its pathway is polyketide biosynthesis; lovastatin biosynthesis. In terms of biological role, lovastatin diketide synthase; part of the gene cluster that mediates the biosynthesis of lovastatin (also known as mevinolin, mevacor or monacolin K), a hypolipidemic inhibitor of (3S)-hydroxymethylglutaryl-coenzyme A (HMG-CoA) reductase (HMGR). The first step in the biosynthesis of lovastatin is the production of dihydromonacolin L acid by the lovastatin nonaketide synthase lovB and the trans-acting enoyl reductase lovC via condensation of one acetyl-CoA unit and 8 malonyl-CoA units. Dihydromonacolin L acid is released from lovB by the thioesterase lovG. Next, dihydromonacolin L acid is oxidized by the dihydromonacolin L monooxygenase lovA twice to form monacolin J acid. The 2-methylbutyrate moiety of lovastatin is synthesized by the lovastatin diketide synthase lovF via condensation of one acetyl-CoA unit and one malonyl-CoA unit. Finally, the covalent attachment of this moiety to monacolin J acid is catalyzed by the transesterase lovD to yield lovastatin. LovD has broad substrate specificity and can also convert monacolin J to simvastatin using alpha-dimethylbutanoyl-S-methyl-3-mercaptopropionate (DMB-S-MMP) as the thioester acyl donor, and can also catalyze the reverse reaction and function as hydrolase in vitro. LovD has much higher activity with LovF-bound 2-methylbutanoate than with free diketide substrates. This chain is Lovastatin diketide synthase lovF, found in Aspergillus terreus.